The following is a 227-amino-acid chain: DNA mismatch repair protein MutH (227 aa).

This sequence belongs to the MutH family.

The protein localises to the cytoplasm. Its function is as follows. Sequence-specific endonuclease that cleaves unmethylated GATC sequences. It is involved in DNA mismatch repair. The chain is DNA mismatch repair protein MutH from Vibrio vulnificus (strain CMCP6).